A 227-amino-acid chain; its full sequence is Eukaryotic translation initiation factor NCBP (227 aa).

Basic and acidic residues predominate over residues 1–22 (MEPAAEKREAEQEELQQQHDEP). Positions 1–43 (MEPAAEKREAEQEELQQQHDEPAVPSADDDEAEAEENERRNRE) are disordered. A compositionally biased stretch (acidic residues) spans 27–36 (ADDDEAEAEE).

Belongs to the eukaryotic initiation factor 4E family. EIF4F is a multi-subunit complex, the composition of which varies with external and internal environmental conditions. It is composed of at least EIF4A, EIF4E and EIF4G. EIF4E is also known to interact with other partners. In higher plants two isoforms of EIF4F have been identified, named isoform EIF4F and isoform EIF(iso)4F. Isoform EIF4F has subunits p220 and p26, whereas isoform EIF(iso)4F has subunits p82 and p28.

Its function is as follows. Recognizes and binds the 7-methylguanosine-containing mRNA cap during an early step in the initiation of protein synthesis and facilitates ribosome binding by inducing the unwinding of the mRNAs secondary structures. In Oryza sativa subsp. japonica (Rice), this protein is Eukaryotic translation initiation factor NCBP (NCBP).